The sequence spans 406 residues: Argininosuccinate synthase (406 aa).

ATP is bound by residues Ala-10 to Ser-18 and Ala-37. L-citrulline-binding residues include Tyr-88 and Ser-93. Position 118 (Gly-118) interacts with ATP. L-aspartate contacts are provided by Thr-120, Asn-124, and Asp-125. Residue Asn-124 coordinates L-citrulline. L-citrulline-binding residues include Arg-128, Ser-179, Ser-188, Glu-264, and Tyr-276.

Belongs to the argininosuccinate synthase family. Type 1 subfamily. Homotetramer.

The protein localises to the cytoplasm. The enzyme catalyses L-citrulline + L-aspartate + ATP = 2-(N(omega)-L-arginino)succinate + AMP + diphosphate + H(+). It functions in the pathway amino-acid biosynthesis; L-arginine biosynthesis; L-arginine from L-ornithine and carbamoyl phosphate: step 2/3. In Dinoroseobacter shibae (strain DSM 16493 / NCIMB 14021 / DFL 12), this protein is Argininosuccinate synthase.